The sequence spans 83 residues: Apolipoprotein C-I (83 aa).

The first 26 residues, 1-26 (MRLFLSLPVLVVVLSIVLEGPAPAQG), serve as a signal peptide directing secretion.

This sequence belongs to the apolipoprotein C1 family. Synthesized mainly in liver and to a minor degree in intestine. Also found in the lung and spleen.

It is found in the secreted. In terms of biological role, inhibitor of lipoprotein binding to the low density lipoprotein (LDL) receptor, LDL receptor-related protein, and very low density lipoprotein (VLDL) receptor. Associates with high density lipoproteins (HDL) and the triacylglycerol-rich lipoproteins in the plasma and makes up about 10% of the protein of the VLDL and 2% of that of HDL. Appears to interfere directly with fatty acid uptake and is also the major plasma inhibitor of cholesteryl ester transfer protein (CETP). Binds free fatty acids and reduces their intracellular esterification. Modulates the interaction of APOE with beta-migrating VLDL and inhibits binding of beta-VLDL to the LDL receptor-related protein. This Homo sapiens (Human) protein is Apolipoprotein C-I (APOC1).